We begin with the raw amino-acid sequence, 307 residues long: Olfactory receptor 5AC1 (307 aa).

The Extracellular portion of the chain corresponds to 1-28 (MAEENKILVTHFVLTGLTDHPGLQAPLF). The helical transmembrane segment at 29–49 (LVFLVIYLITLVGNLGLMALI) threads the bilayer. Residues 50–56 (WKDPHLH) are Cytoplasmic-facing. Residues 57 to 77 (TPIYLFLGSLAFADACTSSSV) form a helical membrane-spanning segment. Residues 78-99 (TSKMLINFLSKNHMLSMAKCAT) lie on the Extracellular side of the membrane. Residues Cys97 and Cys179 are joined by a disulfide bond. The helical transmembrane segment at 100–120 (QFYFFGSNATTECFLLVVMAY) threads the bilayer. The Cytoplasmic portion of the chain corresponds to 121-143 (DRYVAICNPLLYPVVMSNSLCTQ). A helical membrane pass occupies residues 144–164 (FIGISYFIGFLHSAIHVGLLF). Residues 165-195 (RLTFCRSNIIHYFYCEILQLFKISCTNPTVN) lie on the Extracellular side of the membrane. Residues 196 to 216 (ILLIFIFSAFIQVFTFMTLIV) traverse the membrane as a helical segment. Residues 217–239 (SYSYILSAILKKKSEKGRSKAFS) lie on the Cytoplasmic side of the membrane. The chain crosses the membrane as a helical span at residues 240–260 (TCSAHLLSVSLFYGTLFFMYV). Residues 261–271 (SSRSGSAADQA) are Extracellular-facing. Residues 272–292 (KMYSLFYTIIIPLLNPFIYSL) traverse the membrane as a helical segment. Topologically, residues 293–307 (RNKEVIDALRRIMKK) are cytoplasmic.

Belongs to the G-protein coupled receptor 1 family.

The protein resides in the cell membrane. Functionally, odorant receptor. In Homo sapiens (Human), this protein is Olfactory receptor 5AC1 (OR5AC1).